We begin with the raw amino-acid sequence, 692 residues long: Glycine--tRNA ligase beta subunit (692 aa).

The protein belongs to the class-II aminoacyl-tRNA synthetase family. In terms of assembly, tetramer of two alpha and two beta subunits.

The protein resides in the cytoplasm. It catalyses the reaction tRNA(Gly) + glycine + ATP = glycyl-tRNA(Gly) + AMP + diphosphate. The sequence is that of Glycine--tRNA ligase beta subunit from Oceanobacillus iheyensis (strain DSM 14371 / CIP 107618 / JCM 11309 / KCTC 3954 / HTE831).